A 312-amino-acid chain; its full sequence is Photosystem I assembly protein Ycf4 (312 aa).

The next 3 membrane-spanning stretches (helical) occupy residues 42–62, 91–111, and 113–133; these read WAFIVCLGSIGFLLTGISSYF, IILFFPQGLVMCFYGILGLFL, and FYLWFSIFLNIGAGFNEIYIY.

It belongs to the Ycf4 family.

The protein resides in the plastid. Its subcellular location is the chloroplast thylakoid membrane. Its function is as follows. Seems to be required for the assembly of the photosystem I complex. This Pleurastrum terricola (Filamentous green alga) protein is Photosystem I assembly protein Ycf4.